A 137-amino-acid chain; its full sequence is MTLTVRVISPDKTVWDAEADEVILPSTTGQLGILSGHAPLLTALDTGVLRVRTSKSQNWQAIALLGGFAEVEEDEVTILVNGGERGDTINLEEARTAYSQAQTKLNQVPAGDRQAQIQANQAFKRARARFQAAGGLV.

It belongs to the ATPase epsilon chain family. In terms of assembly, F-type ATPases have 2 components, CF(1) - the catalytic core - and CF(0) - the membrane proton channel. CF(1) has five subunits: alpha(3), beta(3), gamma(1), delta(1), epsilon(1). CF(0) has three main subunits: a, b and c.

The protein resides in the cellular thylakoid membrane. In terms of biological role, produces ATP from ADP in the presence of a proton gradient across the membrane. The polypeptide is ATP synthase epsilon chain (Trichormus variabilis (strain ATCC 29413 / PCC 7937) (Anabaena variabilis)).